Here is a 174-residue protein sequence, read N- to C-terminus: Nucleoside-triphosphatase THEP1 (174 aa).

ATP contacts are provided by residues 7–14 and 98–105; these read GRPGSGKS and CIIIDEIG.

It belongs to the THEP1 NTPase family.

It catalyses the reaction a ribonucleoside 5'-triphosphate + H2O = a ribonucleoside 5'-diphosphate + phosphate + H(+). Its function is as follows. Has nucleotide phosphatase activity towards ATP, GTP, CTP, TTP and UTP. May hydrolyze nucleoside diphosphates with lower efficiency. The polypeptide is Nucleoside-triphosphatase THEP1 (Methanothermobacter thermautotrophicus (strain ATCC 29096 / DSM 1053 / JCM 10044 / NBRC 100330 / Delta H) (Methanobacterium thermoautotrophicum)).